The following is a 512-amino-acid chain: Maturase K (512 aa).

It belongs to the intron maturase 2 family. MatK subfamily.

It is found in the plastid. It localises to the chloroplast. In terms of biological role, usually encoded in the trnK tRNA gene intron. Probably assists in splicing its own and other chloroplast group II introns. The protein is Maturase K of Oenothera parviflora (Small-flowered evening primrose).